Here is a 36-residue protein sequence, read N- to C-terminus: Photosystem II reaction center protein Y (36 aa).

Residues 1-4 (MDSR) lie on the Lumenal side of the membrane. Residues 5 to 23 (LLIVLIPVLAAASWAVYNI) traverse the membrane as a helical segment. Topologically, residues 24 to 36 (GRVALQQFRKMTS) are stromal.

The protein belongs to the PsbY family. PSII is composed of 1 copy each of membrane proteins PsbA, PsbB, PsbC, PsbD, PsbE, PsbF, PsbH, PsbI, PsbJ, PsbK, PsbL, PsbM, PsbT, PsbX, PsbY, PsbZ, Psb30/Ycf12, at least 3 peripheral proteins of the oxygen-evolving complex and a large number of cofactors. It forms dimeric complexes.

It localises to the plastid. The protein localises to the chloroplast thylakoid membrane. Loosely associated component of the core of photosystem II (PSII), it is not always seen in crystals. PSII is a light-driven water plastoquinone oxidoreductase, using light energy to abstract electrons from H(2)O, generating a proton gradient subsequently used for ATP formation. This chain is Photosystem II reaction center protein Y, found in Porphyra purpurea (Red seaweed).